The sequence spans 255 residues: MACLGPSAQVPELPEKNCGYREVQYWDQRYQGAADSAPYEWFGDFSCFRDLLEPELRPLDRILVLGCGNSALSYEIFLGGFPDVTSVDYSSVVVAAMRARYAHVPTLRWETMDVRALGFPSGSFDVVLEKGTLDALLTGEQDPWTVSSEGVHTVDQVLNEVSRVLVPAGRFISLTSAAPHFRTRHYAQAHYGWSLRHATYGNGFQFHFYLMQKGKELSVAQLAVGAQILSPPRPPTPSCFLQDSDHEDFLSAIQL.

The S-adenosyl-L-methionine site is built by tryptophan 26 and tyrosine 30. Residue tyrosine 39 is modified to Phosphotyrosine. S-adenosyl-L-methionine contacts are provided by residues tryptophan 41, glycine 66, 88–89, 113–114, and lysine 130; these read DY and DV. Residues 129 to 134 carry the Required for methyltransferase activity motif; sequence EKGTLD.

This sequence belongs to the methyltransferase superfamily.

It carries out the reaction L-lysyl-[protein] + S-adenosyl-L-methionine = N(6)-methyl-L-lysyl-[protein] + S-adenosyl-L-homocysteine + H(+). It catalyses the reaction N(6)-methyl-L-lysyl-[protein] + S-adenosyl-L-methionine = N(6),N(6)-dimethyl-L-lysyl-[protein] + S-adenosyl-L-homocysteine + H(+). The catalysed reaction is N(6),N(6)-dimethyl-L-lysyl-[protein] + S-adenosyl-L-methionine = N(6),N(6),N(6)-trimethyl-L-lysyl-[protein] + S-adenosyl-L-homocysteine + H(+). Functionally, protein-lysine methyltransferase that efficiently catalyzes three successive methylations on 'Lys-36' in eukaryotic translation elongation factor 1 alpha (EEF1A1 or EEF1A2). The protein is EEF1A lysine methyltransferase 4 of Bos taurus (Bovine).